We begin with the raw amino-acid sequence, 354 residues long: Methionine import ATP-binding protein MetN 2 (354 aa).

The ABC transporter domain occupies 6-250 (IELKNISVHF…PQKPLTKEFI (245 aa)). 42–49 (GYSGAGKS) is a binding site for ATP.

It belongs to the ABC transporter superfamily. Methionine importer (TC 3.A.1.24) family. In terms of assembly, the complex is composed of two ATP-binding proteins (MetN), two transmembrane proteins (MetI) and a solute-binding protein (MetQ).

It is found in the cell membrane. It catalyses the reaction L-methionine(out) + ATP + H2O = L-methionine(in) + ADP + phosphate + H(+). It carries out the reaction D-methionine(out) + ATP + H2O = D-methionine(in) + ADP + phosphate + H(+). Functionally, part of the ABC transporter complex MetNIQ involved in methionine import. Responsible for energy coupling to the transport system. The sequence is that of Methionine import ATP-binding protein MetN 2 from Oenococcus oeni (strain ATCC BAA-331 / PSU-1).